The following is a 274-amino-acid chain: MITGYSTPSAHVLMSSRAFKSSSYRAAAGQTQHYLARSSLPVVKNSWGSPPSPFNELPRVSRGVPLSYLSASSSLLLNGEQGSLSGTLPVLPVRRKTLLTPRASKDVPSSFRFPPMTKKPQWWWRTLACLPYLMPLHETWMYAETAYHLHPFLEDFEFLTYPFLGAIGRLPSWFLMAYFFVAYLGIVRRKEWPHFFRFHVVMGMLLEIALQVIGTVSKWMPLGVYWGKFGMHFWTAVAFAYLFTVLESIRCALAGMYADIPFVCDAAYIQIPYD.

A chloroplast-targeting transit peptide spans 1 to 65 (MITGYSTPSA…ELPRVSRGVP (65 aa)). The next 4 helical transmembrane spans lie at 130–152 (LPYLMPLHETWMYAETAYHLHPF), 167–187 (IGRLPSWFLMAYFFVAYLGIV), 200–220 (VVMGMLLEIALQVIGTVSKWM), and 229–249 (FGMHFWTAVAFAYLFTVLESI).

It belongs to the Tic20 family. In terms of assembly, part of the Tic complex. Component of the 1-MD complex, composed of TIC20-I, TIC214, TIC100 and TIC56. Interacts with the translocating preproteins. Hydrolysis of ATP is essential for the formation of this complex. The 1-MD complex interacts with TIC21. Expressed in leaves, shoots and roots. High expression in mature photosynthetic tissues. Lower levels in non-photosynthetic tissues and roots.

It localises to the plastid. Its subcellular location is the chloroplast inner membrane. Its function is as follows. Involved in protein precursor import into chloroplasts. May be part of an intermediate translocation complex acting as a protein-conducting channel at the inner envelope. Seems to be specific for photosynthesis-related pre-proteins. Partially redundant with TIC20-IV, but not with TIC20-II or TIC20-V. This Arabidopsis thaliana (Mouse-ear cress) protein is Protein TIC 20-I, chloroplastic.